Consider the following 438-residue polypeptide: Methylenetetrahydrofolate--tRNA-(uracil-5-)-methyltransferase TrmFO (438 aa).

9–14 is a binding site for FAD; sequence GAGLAG.

This sequence belongs to the MnmG family. TrmFO subfamily. FAD serves as cofactor.

Its subcellular location is the cytoplasm. It catalyses the reaction uridine(54) in tRNA + (6R)-5,10-methylene-5,6,7,8-tetrahydrofolate + NADH + H(+) = 5-methyluridine(54) in tRNA + (6S)-5,6,7,8-tetrahydrofolate + NAD(+). The catalysed reaction is uridine(54) in tRNA + (6R)-5,10-methylene-5,6,7,8-tetrahydrofolate + NADPH + H(+) = 5-methyluridine(54) in tRNA + (6S)-5,6,7,8-tetrahydrofolate + NADP(+). Functionally, catalyzes the folate-dependent formation of 5-methyl-uridine at position 54 (M-5-U54) in all tRNAs. The protein is Methylenetetrahydrofolate--tRNA-(uracil-5-)-methyltransferase TrmFO of Lactobacillus acidophilus (strain ATCC 700396 / NCK56 / N2 / NCFM).